The primary structure comprises 187 residues: NADH-quinone oxidoreductase subunit B (187 aa).

Residues C55, C56, C121, and C150 each coordinate [4Fe-4S] cluster.

This sequence belongs to the complex I 20 kDa subunit family. NDH-1 is composed of 14 different subunits. Subunits NuoB, C, D, E, F, and G constitute the peripheral sector of the complex. The cofactor is [4Fe-4S] cluster.

Its subcellular location is the cell inner membrane. It catalyses the reaction a quinone + NADH + 5 H(+)(in) = a quinol + NAD(+) + 4 H(+)(out). NDH-1 shuttles electrons from NADH, via FMN and iron-sulfur (Fe-S) centers, to quinones in the respiratory chain. The immediate electron acceptor for the enzyme in this species is believed to be ubiquinone. Couples the redox reaction to proton translocation (for every two electrons transferred, four hydrogen ions are translocated across the cytoplasmic membrane), and thus conserves the redox energy in a proton gradient. The chain is NADH-quinone oxidoreductase subunit B from Bdellovibrio bacteriovorus (strain ATCC 15356 / DSM 50701 / NCIMB 9529 / HD100).